The following is a 454-amino-acid chain: F-box/WD repeat-containing protein 2 (454 aa).

An F-box domain is found at 54 to 101 (RDFLKLLPLELSFYLLKWLDPQTLLTCCLVSKQWNKVISACTEVWQTA). 7 WD repeats span residues 139–175 (FETS…LWDV), 179–213 (QCVY…CWEW), 217–255 (ARTQ…VWAL), 259–306 (TCLN…IWPI), 313–352 (KCLK…QWDF), 364–403 (PEIA…RWPL), and 410–452 (KRGS…LWKE). Position 298 is an N6-acetyllysine (Lys298).

As to quaternary structure, directly interacts with SKP1 and CUL1.

In terms of biological role, substrate-recognition component of the SCF (SKP1-CUL1-F-box protein)-type E3 ubiquitin ligase complex. This Homo sapiens (Human) protein is F-box/WD repeat-containing protein 2 (FBXW2).